Reading from the N-terminus, the 459-residue chain is Mitochondrial distribution and morphology protein 34 (459 aa).

Positions 1–190 (MSFRFNEAVF…LPSLIFNTSQ (190 aa)) constitute an SMP-LTD domain. A compositionally biased stretch (basic and acidic residues) spans 338-347 (RSNSNDDNAK). The segment at 338–375 (RSNSNDDNAKPRRRKIKCKKTRTPSNLQSQGEQAVDDS) is disordered. The segment covering 348–359 (PRRRKIKCKKTR) has biased composition (basic residues).

This sequence belongs to the MDM34 family. In terms of assembly, component of the ER-mitochondria encounter structure (ERMES) or MDM complex, composed of MMM1, MDM10, MDM12 and MDM34. Ubiquitinated by a SCF (SKP1-CUL1-F-box protein) E3 ubiquitin-protein ligase complex containing the F-box protein MDM30. Ubiquitination is important for mitochondrial integrity.

It localises to the mitochondrion outer membrane. Its function is as follows. Component of the ERMES/MDM complex, which serves as a molecular tether to connect the endoplasmic reticulum (ER) and mitochondria. Components of this complex are involved in the control of mitochondrial shape and protein biogenesis, and function in nonvesicular lipid trafficking between the ER and mitochondria. MDM34 is required for the interaction of the ER-resident membrane protein MMM1 and the outer mitochondrial membrane-resident beta-barrel protein MDM10. In Saccharomyces cerevisiae (strain RM11-1a) (Baker's yeast), this protein is Mitochondrial distribution and morphology protein 34.